Here is a 349-residue protein sequence, read N- to C-terminus: Protein-glutamate methylesterase/protein-glutamine glutaminase 1 (349 aa).

The 116-residue stretch at 4–119 (RILVVDDSAV…KGFLEDSARR (116 aa)) folds into the Response regulatory domain. D53 is modified (4-aspartylphosphate). Residues 159–349 (PRAGRAELVV…VASAVLAWAR (191 aa)) form the CheB-type methylesterase domain. Residues S172, H198, and D293 contribute to the active site.

Belongs to the CheB family. Post-translationally, phosphorylated by CheA. Phosphorylation of the N-terminal regulatory domain activates the methylesterase activity.

It localises to the cytoplasm. It catalyses the reaction [protein]-L-glutamate 5-O-methyl ester + H2O = L-glutamyl-[protein] + methanol + H(+). The enzyme catalyses L-glutaminyl-[protein] + H2O = L-glutamyl-[protein] + NH4(+). Functionally, involved in chemotaxis. Part of a chemotaxis signal transduction system that modulates chemotaxis in response to various stimuli. Catalyzes the demethylation of specific methylglutamate residues introduced into the chemoreceptors (methyl-accepting chemotaxis proteins or MCP) by CheR. Also mediates the irreversible deamidation of specific glutamine residues to glutamic acid. This Anaeromyxobacter dehalogenans (strain 2CP-C) protein is Protein-glutamate methylesterase/protein-glutamine glutaminase 1.